A 257-amino-acid polypeptide reads, in one-letter code: Acetyl-coenzyme A carboxylase carboxyl transferase subunit beta 1 (257 aa).

The region spanning 1–257 is the CoA carboxyltransferase N-terminal domain; sequence MNINDIFLKR…KMHVNTGGEA (257 aa).

Belongs to the AccD/PCCB family. As to quaternary structure, acetyl-CoA carboxylase is a heterohexamer composed of biotin carboxyl carrier protein (AccB), biotin carboxylase (AccC) and two subunits each of ACCase subunit alpha (AccA) and ACCase subunit beta (AccD).

It is found in the cytoplasm. The catalysed reaction is N(6)-carboxybiotinyl-L-lysyl-[protein] + acetyl-CoA = N(6)-biotinyl-L-lysyl-[protein] + malonyl-CoA. It participates in lipid metabolism; malonyl-CoA biosynthesis; malonyl-CoA from acetyl-CoA: step 1/1. Its function is as follows. Component of the acetyl coenzyme A carboxylase (ACC) complex. Biotin carboxylase (BC) catalyzes the carboxylation of biotin on its carrier protein (BCCP) and then the CO(2) group is transferred by the transcarboxylase to acetyl-CoA to form malonyl-CoA. This is Acetyl-coenzyme A carboxylase carboxyl transferase subunit beta 1 from Lachnospira eligens (strain ATCC 27750 / DSM 3376 / VPI C15-48 / C15-B4) (Eubacterium eligens).